The primary structure comprises 806 residues: DEP domain-containing protein 1A (806 aa).

The DEP domain maps to 24 to 108 (FRAAMPLRKH…DNNSLYRFPS (85 aa)). Residues 142–177 (QFSKKTPKRRASVDSKEEQENEDLMEDQRNDDDFPK) form a disordered region. Over residues 167–177 (EDQRNDDDFPK) the composition is skewed to basic and acidic residues. The 41-residue stretch at 279–319 (DYFLNLPEPLLTFEFYELFVNILVVCGYITVPNSHNGKHRF) folds into the Rho-GAP domain. The segment at 564–588 (SHSSFPSTSSLLPPTTSPNSTGSES) is disordered.

The protein is DEP domain-containing protein 1A (depdc1a) of Xenopus laevis (African clawed frog).